The sequence spans 303 residues: Quinolinate synthase (303 aa).

Iminosuccinate-binding residues include H24 and S41. C86 provides a ligand contact to [4Fe-4S] cluster. Residues Y112–N114 and S129 each bind iminosuccinate. Position 172 (C172) interacts with [4Fe-4S] cluster. Iminosuccinate-binding positions include H198–E200 and T215. C260 serves as a coordination point for [4Fe-4S] cluster.

Belongs to the quinolinate synthase family. Type 2 subfamily. [4Fe-4S] cluster is required as a cofactor.

The protein localises to the cytoplasm. It carries out the reaction iminosuccinate + dihydroxyacetone phosphate = quinolinate + phosphate + 2 H2O + H(+). It functions in the pathway cofactor biosynthesis; NAD(+) biosynthesis; quinolinate from iminoaspartate: step 1/1. In terms of biological role, catalyzes the condensation of iminoaspartate with dihydroxyacetone phosphate to form quinolinate. This Clostridium kluyveri (strain NBRC 12016) protein is Quinolinate synthase.